The sequence spans 254 residues: tRNA uridine(34) hydroxylase (254 aa).

The region spanning 123-217 (QDPNVILLDT…YLESIPEGES (95 aa)) is the Rhodanese domain. Cysteine 177 functions as the Cysteine persulfide intermediate in the catalytic mechanism.

Belongs to the TrhO family.

The catalysed reaction is uridine(34) in tRNA + AH2 + O2 = 5-hydroxyuridine(34) in tRNA + A + H2O. Its function is as follows. Catalyzes oxygen-dependent 5-hydroxyuridine (ho5U) modification at position 34 in tRNAs. The polypeptide is tRNA uridine(34) hydroxylase (Legionella pneumophila (strain Lens)).